Reading from the N-terminus, the 504-residue chain is Signal transduction histidine-protein kinase/phosphatase MprB (504 aa).

Residues 1–26 are Cytoplasmic-facing; it reads MWWFRRRDRAPLRATSSLSLRWRVML. Residues 27–47 traverse the membrane as a helical segment; it reads LAMSMVAMVVVLMSFAVYAVI. Topologically, residues 48–163 are extracellular; sequence SAALYSDIDN…PTEAVMNKLR (116 aa). A helical transmembrane segment spans residues 164–184; that stretch reads WVLLIVGGIGVAVAAVAGGMV. Residues 185-504 are Cytoplasmic-facing; it reads TRAGLRPVGR…SVESQSTRAT (320 aa). In terms of domain architecture, HAMP spans 186–238; sequence RAGLRPVGRLTEAAERVARTDDLRPIPVFGSDELARLTEAFNLMLRALAESRE. In terms of domain architecture, Histidine kinase spans 246-466; sequence DAGHELRTPL…SIYVLLPGRR (221 aa). The residue at position 249 (His249) is a Phosphohistidine; by autocatalysis. The interval 471 to 504 is disordered; the sequence is QLPGATAGARSTDIENSRGSANVISVESQSTRAT. Over residues 487 to 504 the composition is skewed to polar residues; it reads SRGSANVISVESQSTRAT.

Requires Mg(2+) as cofactor. The cofactor is Mn(2+). Post-translationally, autophosphorylated.

It is found in the cell membrane. The catalysed reaction is ATP + protein L-histidine = ADP + protein N-phospho-L-histidine.. Its function is as follows. Member of the two-component regulatory system MprB/MprA which contributes to maintaining a balance among several systems involved in stress resistance and is required for establishment and maintenance of persistent infection in the host. In response to environmental signals MprB acts both as a membrane-associated protein kinase that undergoes autophosphorylation and subsequently transfers the phosphate to MprA, and a protein phosphatase that dephosphorylates phospho-MprA. MprB/MprA up-regulates expression of mprA and pepD. In Mycobacterium bovis (strain ATCC BAA-935 / AF2122/97), this protein is Signal transduction histidine-protein kinase/phosphatase MprB (mprB).